The following is a 378-amino-acid chain: Histidinol-phosphate aminotransferase (378 aa).

The interval 1-20 is disordered; that stretch reads MSVSAKETQRHPARPEPRPG. Basic and acidic residues predominate over residues 7-17; it reads ETQRHPARPEP. Lys-232 is subject to N6-(pyridoxal phosphate)lysine.

It belongs to the class-II pyridoxal-phosphate-dependent aminotransferase family. Histidinol-phosphate aminotransferase subfamily. As to quaternary structure, homodimer. Pyridoxal 5'-phosphate serves as cofactor.

It catalyses the reaction L-histidinol phosphate + 2-oxoglutarate = 3-(imidazol-4-yl)-2-oxopropyl phosphate + L-glutamate. It participates in amino-acid biosynthesis; L-histidine biosynthesis; L-histidine from 5-phospho-alpha-D-ribose 1-diphosphate: step 7/9. This Azorhizobium caulinodans (strain ATCC 43989 / DSM 5975 / JCM 20966 / LMG 6465 / NBRC 14845 / NCIMB 13405 / ORS 571) protein is Histidinol-phosphate aminotransferase.